A 152-amino-acid chain; its full sequence is Ribosome maturation factor RimP (152 aa).

The protein belongs to the RimP family.

The protein localises to the cytoplasm. In terms of biological role, required for maturation of 30S ribosomal subunits. The polypeptide is Ribosome maturation factor RimP (Yersinia enterocolitica serotype O:8 / biotype 1B (strain NCTC 13174 / 8081)).